Here is a 348-residue protein sequence, read N- to C-terminus: uncharacterized protein (348 aa).

Functionally, may be involved in apoptosis regulation. This is an uncharacterized protein from Rattus norvegicus (Rat).